Here is a 382-residue protein sequence, read N- to C-terminus: Glucose-1-phosphate adenylyltransferase (382 aa).

Alpha-D-glucose 1-phosphate is bound by residues Tyr100, Gly165, 180-181 (EK), and Ser191.

Belongs to the bacterial/plant glucose-1-phosphate adenylyltransferase family. As to quaternary structure, homotetramer.

It catalyses the reaction alpha-D-glucose 1-phosphate + ATP + H(+) = ADP-alpha-D-glucose + diphosphate. Its pathway is glycan biosynthesis; glycogen biosynthesis. Involved in the biosynthesis of ADP-glucose, a building block required for the elongation reactions to produce glycogen. Catalyzes the reaction between ATP and alpha-D-glucose 1-phosphate (G1P) to produce pyrophosphate and ADP-Glc. This is Glucose-1-phosphate adenylyltransferase from Clostridium novyi (strain NT).